We begin with the raw amino-acid sequence, 978 residues long: Retinoblastoma-related protein 2 (978 aa).

The segment at 385 to 585 (TPVTSAMTTA…EKGSSLYNSL (201 aa)) is domain A. Residues 385–832 (TPVTSAMTTA…NQVFVPTVKP (448 aa)) are pocket. The segment at 586–704 (VVARPSLSTE…PVSGNEKCAV (119 aa)) is spacer. Positions 616–645 (QSIHPDGLPPTPSKRWPSAGPDGNCYPQSP) are disordered. Residues 705 to 832 (VGVQIFFSKI…NQVFVPTVKP (128 aa)) are domain B. Disordered stretches follow at residues 841–878 (STRP…SSSH) and 947–978 (VAGS…KTDS). A compositionally biased stretch (polar residues) spans 850-864 (TNSQIPGSPKSSPFS). Residues 958–971 (SASSDPAAAFSPLS) show a composition bias toward low complexity.

This sequence belongs to the retinoblastoma protein (RB) family.

The protein resides in the nucleus. Functionally, regulator of biological processes that recruits a histone deacetylase to control gene transcription. May play a role in the entry into mitosis, negatively regulating the cell proliferation. Formation of stable complexes with geminiviridae replication-associated proteins may create a cellular environment which favors viral DNA replication. The protein is Retinoblastoma-related protein 2 (RBR2) of Oryza sativa subsp. japonica (Rice).